The primary structure comprises 251 residues: LexA repressor (251 aa).

Residues 26–46 (FDEMKDALGLKSKSGIHRLIK) constitute a DNA-binding region (H-T-H motif). Active-site for autocatalytic cleavage activity residues include serine 172 and lysine 210.

It belongs to the peptidase S24 family. As to quaternary structure, homodimer.

The enzyme catalyses Hydrolysis of Ala-|-Gly bond in repressor LexA.. Its function is as follows. Represses a number of genes involved in the response to DNA damage (SOS response), including recA and lexA. In the presence of single-stranded DNA, RecA interacts with LexA causing an autocatalytic cleavage which disrupts the DNA-binding part of LexA, leading to derepression of the SOS regulon and eventually DNA repair. The polypeptide is LexA repressor (Rhodospirillum rubrum (strain ATCC 11170 / ATH 1.1.1 / DSM 467 / LMG 4362 / NCIMB 8255 / S1)).